Here is a 152-residue protein sequence, read N- to C-terminus: Transcriptional regulator MraZ (152 aa).

2 consecutive SpoVT-AbrB domains span residues alanine 5–glutamate 52 and alanine 81–threonine 124.

Belongs to the MraZ family. Forms oligomers.

The protein resides in the cytoplasm. Its subcellular location is the nucleoid. In terms of biological role, negatively regulates its own expression and that of the subsequent genes in the proximal part of the division and cell wall (dcw) gene cluster. Acts by binding directly to DNA. May also regulate the expression of genes outside the dcw cluster. This Pectobacterium atrosepticum (strain SCRI 1043 / ATCC BAA-672) (Erwinia carotovora subsp. atroseptica) protein is Transcriptional regulator MraZ.